Reading from the N-terminus, the 191-residue chain is Xanthine phosphoribosyltransferase (191 aa).

2 residues coordinate xanthine: leucine 20 and asparagine 27. 5-phospho-alpha-D-ribose 1-diphosphate is bound at residue 128-132; sequence ANGQA. A xanthine-binding site is contributed by lysine 156.

Belongs to the purine/pyrimidine phosphoribosyltransferase family. Xpt subfamily. Homodimer.

It localises to the cytoplasm. The catalysed reaction is XMP + diphosphate = xanthine + 5-phospho-alpha-D-ribose 1-diphosphate. Its pathway is purine metabolism; XMP biosynthesis via salvage pathway; XMP from xanthine: step 1/1. Its function is as follows. Converts the preformed base xanthine, a product of nucleic acid breakdown, to xanthosine 5'-monophosphate (XMP), so it can be reused for RNA or DNA synthesis. This Acinetobacter baylyi (strain ATCC 33305 / BD413 / ADP1) protein is Xanthine phosphoribosyltransferase.